The chain runs to 256 residues: Trypsinogen-like protein 3 (256 aa).

The first 14 residues, 1–14, serve as a signal peptide directing secretion; that stretch reads MILLLVLALGLAGA. One can recognise a Peptidase S1 domain in the interval 15 to 237; it reads SPLGEYKECP…YNDWIHQVMA (223 aa). Disulfide bonds link C23/C153, C41/C57, C125/C226, C132/C199, C164/C180, and C189/C213.

It belongs to the peptidase S1 family.

In Pseudopleuronectes americanus (Winter flounder), this protein is Trypsinogen-like protein 3 (trp3).